A 231-amino-acid polypeptide reads, in one-letter code: Nuclear transcription factor Y subunit C-9 (231 aa).

A disordered region spans residues 211–231 (NPYMGQPMWQQQAPDQPDQEN).

Belongs to the NFYC/HAP5 subunit family. As to quaternary structure, heterotrimeric transcription factor composed of three components, NF-YA, NF-YB and NF-YC. Interacts with NFYA2, NFYB2, CO and RGA. Interacts with REF6 (via N-terminus). In terms of tissue distribution, ubiquitous. Present in etiolated seedlings.

It is found in the nucleus. Stimulates the transcription of various genes by recognizing and binding to a CCAAT motif in promoters. Interacts with REF6 to directly regulate SOC1 transcription in response to flowering signals from photoperiod and gibberellic acid pathways. The protein is Nuclear transcription factor Y subunit C-9 (NFYC9) of Arabidopsis thaliana (Mouse-ear cress).